Here is a 404-residue protein sequence, read N- to C-terminus: Phosphopentomutase (404 aa).

Positions 10, 303, 308, 344, 345, and 356 each coordinate Mn(2+).

The protein belongs to the phosphopentomutase family. The cofactor is Mn(2+).

The protein localises to the cytoplasm. The catalysed reaction is 2-deoxy-alpha-D-ribose 1-phosphate = 2-deoxy-D-ribose 5-phosphate. It carries out the reaction alpha-D-ribose 1-phosphate = D-ribose 5-phosphate. It participates in carbohydrate degradation; 2-deoxy-D-ribose 1-phosphate degradation; D-glyceraldehyde 3-phosphate and acetaldehyde from 2-deoxy-alpha-D-ribose 1-phosphate: step 1/2. Isomerase that catalyzes the conversion of deoxy-ribose 1-phosphate (dRib-1-P) and ribose 1-phosphate (Rib-1-P) to deoxy-ribose 5-phosphate (dRib-5-P) and ribose 5-phosphate (Rib-5-P), respectively. This Shewanella sp. (strain W3-18-1) protein is Phosphopentomutase.